A 193-amino-acid chain; its full sequence is NADH-quinone oxidoreductase subunit B (193 aa).

[4Fe-4S] cluster-binding residues include Cys-72, Cys-73, Cys-137, and Cys-167.

The protein belongs to the complex I 20 kDa subunit family. NDH-1 is composed of 14 different subunits. Subunits NuoB, C, D, E, F, and G constitute the peripheral sector of the complex. Requires [4Fe-4S] cluster as cofactor.

The protein localises to the cell inner membrane. It catalyses the reaction a quinone + NADH + 5 H(+)(in) = a quinol + NAD(+) + 4 H(+)(out). Its function is as follows. NDH-1 shuttles electrons from NADH, via FMN and iron-sulfur (Fe-S) centers, to quinones in the respiratory chain. The immediate electron acceptor for the enzyme in this species is believed to be ubiquinone. Couples the redox reaction to proton translocation (for every two electrons transferred, four hydrogen ions are translocated across the cytoplasmic membrane), and thus conserves the redox energy in a proton gradient. The protein is NADH-quinone oxidoreductase subunit B of Bartonella henselae (strain ATCC 49882 / DSM 28221 / CCUG 30454 / Houston 1) (Rochalimaea henselae).